Here is a 143-residue protein sequence, read N- to C-terminus: Transcriptional regulator MraZ (143 aa).

SpoVT-AbrB domains follow at residues 5–47 (EYQH…PQEE) and 76–119 (ASEC…SKSE).

It belongs to the MraZ family. In terms of assembly, forms oligomers.

The protein resides in the cytoplasm. Its subcellular location is the nucleoid. The chain is Transcriptional regulator MraZ from Listeria welshimeri serovar 6b (strain ATCC 35897 / DSM 20650 / CCUG 15529 / CIP 8149 / NCTC 11857 / SLCC 5334 / V8).